Reading from the N-terminus, the 322-residue chain is MDESHTIWIEKYRPAKLADIVGQDDIVERLSSYVKSGNLPHLLFTGSAGVGKTTAAVTLAREFFGDSWQMNFRELNASDERGIDVVRNQIKEFARTRPAGDAAFKILFLDEADALTTDAQAALRRTMESYAKTCRFILSCNYSSKIIDPIQSRCAIYRFRPLGPQAVKEEITRIAAREHLDVTPEAMDAMVYIAQGDMRKAINALQGAAILSATIEAPMVYAITSNARPEEIGELLTLSLSGDFDGAEALLTRLLRERGIAPNELINQCYRALTKRDMDRVLKVELIDALGETDFRLSEGASSDIQMEALIARFVLAGTRKR.

ATP is bound at residue Gly-46–Thr-53.

It belongs to the activator 1 small subunits family. RfcS subfamily. As to quaternary structure, heteromultimer composed of small subunits (RfcS) and large subunits (RfcL).

Part of the RFC clamp loader complex which loads the PCNA sliding clamp onto DNA. This chain is Replication factor C small subunit, found in Methanoregula boonei (strain DSM 21154 / JCM 14090 / 6A8).